A 407-amino-acid chain; its full sequence is MAANYGISTAALRSQLMGLINFTGTHKDQADKYRQLLKTVLTNTGQELIDGLRLFVEAIVNEHVSLVISRQILNDVGSELSKLPDDLSKMLSHFTLEKVNPRVISFEEQVAGIRFHLANIYERNQQWRDAATVLVGIPLETGQKQYSVECKLGTYLKIARLYLEDNDSVQAELFINRASLLQAETNSEELQVLYKVCYARVLDYRRKFIEAAQRYNELSYRKIVDQGERMTALKKALICTVLASAGQQRSRMLATLFKDERCQHLPAYGILEKMYLERIIRRSELQEFEALLQDHQKAATSDGSSILDRAVFEHNLLSASKLYNNITFEELGALLDIPAVKAEKIASQMITEGRMNGHIDQISAIVHFENRELLPQWDRQIQSLCYQVNSIIEKISVAEPDWMDNLN.

Residues 204 to 373 form the PCI domain; it reads YRRKFIEAAQ…AIVHFENREL (170 aa).

Belongs to the CSN4 family. In terms of assembly, component of the CSN complex, probably composed of CSN1b, alien/CSN2, CSN3, CSN4, CSN5, CSN6, CSN7 and CSN8. Interacts directly with CSN7.

It is found in the cytoplasm. It localises to the nucleus. In terms of biological role, component of the COP9 signalosome complex (CSN), a complex involved in various cellular and developmental processes. The CSN complex is an essential regulator of the ubiquitin (Ubl) conjugation pathway by mediating the deneddylation of the cullin subunits of the SCF-type E3 ligase complexes, leading to decrease the Ubl ligase activity of SCF. The CSN complex plays an essential role in oogenesis and embryogenesis and is required for proper photoreceptor R cell differentiation and promote lamina glial cell migration or axon targeting. It also promotes Ubl-dependent degradation of cyclin E (CycE) during early oogenesis. This Drosophila melanogaster (Fruit fly) protein is COP9 signalosome complex subunit 4 (CSN4).